The primary structure comprises 339 residues: NADH-quinone oxidoreductase subunit H (339 aa).

The next 9 membrane-spanning stretches (helical) occupy residues 10–30 (FPLIIIALKVVAITVPLILCV), 50–70 (PNVVGPFGLLQPIADAVKLLF), 82–102 (ILFILAPMITFILSLIGWAVV), 115–135 (VGVLYILAISSLSVYGIIIAG), 161–181 (MGLVIITVLLTTGTLNLSGII), 187–207 (IPWWIDLMLLPMGVVFFISVL), 235–255 (MGFALFFLGEYANMILVSAMT), 275–295 (IPGFFWFAFKVGFLLFCFLWI), and 310–330 (LGWKVLLPLTLFWVVLVSSVL).

Belongs to the complex I subunit 1 family. In terms of assembly, NDH-1 is composed of 14 different subunits. Subunits NuoA, H, J, K, L, M, N constitute the membrane sector of the complex.

The protein resides in the cell inner membrane. It carries out the reaction a quinone + NADH + 5 H(+)(in) = a quinol + NAD(+) + 4 H(+)(out). Its function is as follows. NDH-1 shuttles electrons from NADH, via FMN and iron-sulfur (Fe-S) centers, to quinones in the respiratory chain. The immediate electron acceptor for the enzyme in this species is believed to be ubiquinone. Couples the redox reaction to proton translocation (for every two electrons transferred, four hydrogen ions are translocated across the cytoplasmic membrane), and thus conserves the redox energy in a proton gradient. This subunit may bind ubiquinone. This chain is NADH-quinone oxidoreductase subunit H, found in Rickettsia canadensis (strain McKiel).